The primary structure comprises 1603 residues: Gag-Pol polyprotein (1603 aa).

Positions 128 to 141 are enriched in basic and acidic residues; the sequence is VGETTVQRDAKMAP. The interval 128 to 150 is disordered; the sequence is VGETTVQRDAKMAPEETATPKTV. Positions 172-175 match the PPXY motif motif; the sequence is PPPY. An LYPX(n)L motif motif is present at residues 180–184; that stretch reads LYPSL. The disordered stretch occupies residues 181–215; the sequence is YPSLAGVGEQQGQGGDTPRGAEQPRAEPGHAGLAP. Positions 219-229 match the Nuclear export signal motif; that stretch reads LTDWARIREEL. CCHC-type zinc fingers lie at residues 507-524 and 533-550; these read RLCY…QCPK and ERCQ…QCRR. Residues 544–571 are disordered; that stretch reads NAKQCRRRDSNQGQRPGRGLSSGPWPVS. In terms of domain architecture, Peptidase A2 spans 609 to 690; the sequence is ITALLDSGAD…VRGSILGRDC (82 aa). D614 functions as the For protease activity; shared with dimeric partner in the catalytic mechanism. Positions 750–938 constitute a Reverse transcriptase domain; it reads LQLGHIEPSL…PGVQYLGYKL (189 aa). Mg(2+) contacts are provided by D815, D890, D891, D1158, E1192, D1213, and D1272. Positions 1149-1280 constitute an RNase H type-1 domain; sequence PVPGPTVFTD…ADSQATFQAY (132 aa). Residues 1280-1321 form an Integrase-type zinc finger; sequence YPLREAKDLHTTLHIGPRALSKACNISMQQAREVVQTCPHCN. Zn(2+) is bound by residues H1289, H1293, C1317, and C1320. In terms of domain architecture, Integrase catalytic spans 1333–1496; sequence RGLGPLQIWQ…TPVQKHWRPT (164 aa). Residues D1344, D1401, and E1437 each coordinate Mg(2+). The segment at residues 1502–1550 is a DNA-binding region (integrase-type); the sequence is PPVKIRIETGEWEKGWNVLVWGRGYAAVKNRDTDKVIWVPSRKVKPDIT. Residues 1548–1567 form an involved in homooctamerization region; that stretch reads DITQKDEVTKKDEASPLFAG. Residues 1549–1561 are compositionally biased toward basic and acidic residues; it reads ITQKDEVTKKDEA. A disordered region spans residues 1549 to 1603; it reads ITQKDEVTKKDEASPLFAGSSDWIPWGDEQEGLQEEAASNKQEGPGEDTLAANES.

Active as a homodimer. In terms of assembly, homodimer. Homomultimer. Homohexamer. As to quaternary structure, homodimer; further associates as a homooctamer. Heterodimer of alpha and beta subunits. Three forms of RT exist: alpha-alpha (alpha-Pol), beta-beta (beta-Pol), and alpha-beta, with the major form being the heterodimer. Both the polymerase and RNase H active sites are located in the alpha subunit of heterodimeric RT alpha-beta. It depends on Mg(2+) as a cofactor. Mn(2+) serves as cofactor. In terms of processing, specific enzymatic cleavages in vivo yield mature proteins. Capsid protein p27: The cleavage at the C-terminus is slowly trimmed by the viral protease, sometimes being cut internally thereby generating the short version of the capsid protein and a capsid protein C-terminally extended by 3 amino acids in a ratio of 2:1.

It is found in the virion. It catalyses the reaction DNA(n) + a 2'-deoxyribonucleoside 5'-triphosphate = DNA(n+1) + diphosphate. The catalysed reaction is Endonucleolytic cleavage to 5'-phosphomonoester.. Its function is as follows. Capsid protein p27: Self-associates to form the irregular polyhedron core composed of hexamers and pentamers, that encapsulates the genomic RNA-nucleocapsid complex. Assembles as a tube in vitro. Binds to inositol hexakisphosphate (IP6), which allows the assembly of the polyhedral capsid. Functionally, plays a role in the oligomerization of the Gag polyprotein and in the stabilization of the immature particle. Essential layering element during tube assembly. Allows the cooperative binging of Gag to the host plasma membrane. Binds strongly to viral nucleic acids and promotes their packaging. Plays a role in the maturation-stabilization of the viral dimeric RNA via highly structured zinc-binding motifs. In terms of biological role, the aspartyl protease mediates proteolytic cleavages of Gag and Gag-Pol polyproteins during or shortly after the release of the virion from the plasma membrane. Cleavages take place as an ordered, step-wise cascade to yield mature proteins. This process is called maturation. Displays maximal activity during the budding process just prior to particle release from the cell. Its function is as follows. Catalyzes viral DNA integration into the host chromosome, by performing a series of DNA cutting and joining reactions. This recombination event is an essential step in the viral replication cycle. Has a strong preference for using the 3'-OH at the viral DNA end as a nucleophile. This chain is Gag-Pol polyprotein (gag-pol), found in Rous sarcoma virus subgroup B (strain Schmidt-Ruppin) (RSV-SR-B).